Here is a 301-residue protein sequence, read N- to C-terminus: Protoheme IX farnesyltransferase (301 aa).

A run of 8 helical transmembrane segments spans residues 30 to 50 (VISLLDLAAIAGFVLGLPKAI), 55 to 75 (IIVSFLAVIIGGSLASGGGMI), 106 to 126 (AYAIGSIFIVVGTLIGFLANP), 127 to 147 (LTALFIALGAFIYVVIYSIWL), 152 to 172 (WWNIVIGGFAGSAAAWAGFAA), 177 to 197 (FTLLSFLLGFLIFMWTPGHFW), 233 to 253 (ALMVPFALLIGLYAGLIYLIV), and 281 to 301 (FKLSSPYLAIILLTLIIVKLI).

Belongs to the UbiA prenyltransferase family. Protoheme IX farnesyltransferase subfamily.

It is found in the cell membrane. It catalyses the reaction heme b + (2E,6E)-farnesyl diphosphate + H2O = Fe(II)-heme o + diphosphate. Its pathway is porphyrin-containing compound metabolism; heme O biosynthesis; heme O from protoheme: step 1/1. Functionally, converts heme B (protoheme IX) to heme O by substitution of the vinyl group on carbon 2 of heme B porphyrin ring with a hydroxyethyl farnesyl side group. The sequence is that of Protoheme IX farnesyltransferase from Sulfurisphaera tokodaii (strain DSM 16993 / JCM 10545 / NBRC 100140 / 7) (Sulfolobus tokodaii).